We begin with the raw amino-acid sequence, 363 residues long: Aminomethyltransferase (363 aa).

This sequence belongs to the GcvT family. The glycine cleavage system is composed of four proteins: P, T, L and H.

It carries out the reaction N(6)-[(R)-S(8)-aminomethyldihydrolipoyl]-L-lysyl-[protein] + (6S)-5,6,7,8-tetrahydrofolate = N(6)-[(R)-dihydrolipoyl]-L-lysyl-[protein] + (6R)-5,10-methylene-5,6,7,8-tetrahydrofolate + NH4(+). In terms of biological role, the glycine cleavage system catalyzes the degradation of glycine. The chain is Aminomethyltransferase from Staphylococcus aureus (strain MRSA252).